We begin with the raw amino-acid sequence, 206 residues long: MATGVMLCAARALRPRSWIPGTCQAHVRHTHQRASLLAFWDLIPMRAEPLRKKKKVDPRKDQAAKDRLKKRIRKLEKASQELIPIEDFITPVRFLDKSRQRPQEEHSPEESERRALLLKRWALFKQQEHEMERDAIRSMLEAQQEALEELKLESAELYAEAIKRDTSLFPFEKEGPHYTPPISNYQAPEGRYNDITKVYTQVEFKR.

Residues 1-46 (MATGVMLCAARALRPRSWIPGTCQAHVRHTHQRASLLAFWDLIPMR) constitute a mitochondrion transit peptide. The tract at residues 170–189 (PFEKEGPHYTPPISNYQAPE) is disordered.

The protein belongs to the mitochondrion-specific ribosomal protein mL40 family. As to quaternary structure, component of the mitochondrial ribosome large subunit (39S) which comprises a 16S rRNA and about 50 distinct proteins. As to expression, ubiquitous.

The protein resides in the mitochondrion. This Mus musculus (Mouse) protein is Large ribosomal subunit protein mL40 (Mrpl40).